We begin with the raw amino-acid sequence, 879 residues long: Metabotropic glutamate receptor 3 (879 aa).

The signal sequence occupies residues 1–22 (MKMLTRLQVLTLALFSKGFLLS). At 23-576 (LGDHNFLRRE…EDYIRWEDAW (554 aa)) the chain is on the extracellular side. Cysteine 57 and cysteine 99 are disulfide-bonded. L-glutamate is bound by residues serine 151 and 172–174 (AST). A glycan (N-linked (GlcNAc...) asparagine) is linked at asparagine 209. Tyrosine 222 contacts L-glutamate. Disulfide bonds link cysteine 240-cysteine 527, cysteine 361-cysteine 373, cysteine 412-cysteine 419, cysteine 509-cysteine 528, cysteine 513-cysteine 531, cysteine 534-cysteine 546, and cysteine 549-cysteine 562. An N-linked (GlcNAc...) asparagine glycan is attached at asparagine 292. Aspartate 301 contributes to the L-glutamate binding site. Lysine 389 lines the L-glutamate pocket. 2 N-linked (GlcNAc...) asparagine glycosylation sites follow: asparagine 414 and asparagine 439. The chain crosses the membrane as a helical span at residues 577 to 599 (VIGPVTIACLGFMCTCMVVTVFI). Residues 600 to 613 (KHNNTPLVKASGRE) lie on the Cytoplasmic side of the membrane. Residues 614–634 (LCYILLFGVGLSYCMTFFFIA) form a helical membrane-spanning segment. At 635–645 (KPSPVICALRR) the chain is on the extracellular side. A helical membrane pass occupies residues 646–664 (LGLGSSFAICYSALLTKTN). Residues 665–688 (CIARIFDGVKNGAQRPKFISPSSQ) are Cytoplasmic-facing. A helical membrane pass occupies residues 689–709 (VFICLGLILVQIVMVSVWLIL). The Extracellular portion of the chain corresponds to 710–734 (EAPGTRRYTLAEKRETVILKCNVKD). The helical transmembrane segment at 735-756 (SSMLISLTYDVILVILCTVYAF) threads the bilayer. The Cytoplasmic segment spans residues 757–769 (KTRKCPENFNEAK). The chain crosses the membrane as a helical span at residues 770-792 (FIGFTMYTTCIIWLAFLPIFYVT). Residues 793-802 (SSDYRVQTTT) are Extracellular-facing. Residues 803-828 (MCISVSLSGFVVLGCLFAPKVHIILF) traverse the membrane as a helical segment. Residues 829 to 879 (QPQKNVVTHRLHLNRFSVSGTGTTYSQSSASTYVPTVCNGREVLDSTTSSL) are Cytoplasmic-facing.

This sequence belongs to the G-protein coupled receptor 3 family. Interacts with TAMALIN.

It localises to the cell membrane. Functionally, G-protein coupled receptor for glutamate. Ligand binding causes a conformation change that triggers signaling via guanine nucleotide-binding proteins (G proteins) and modulates the activity of down-stream effectors. Signaling inhibits adenylate cyclase activity. In Pongo abelii (Sumatran orangutan), this protein is Metabotropic glutamate receptor 3 (GRM3).